The chain runs to 148 residues: Receptor activity-modifying protein 1 (148 aa).

Positions 1 to 26 are cleaved as a signal peptide; it reads MAPGLRGLPRCGLWLLLAHHLFMVTA. Cystine bridges form between C27–C82, C40–C72, and C57–C104. Residues 27–118 are Extracellular-facing; the sequence is CRDPDYGTLI…RALRDPPNSI (92 aa). Residues 119–140 traverse the membrane as a helical segment; that stretch reads LCPFIALPITVTLLMTALVVWR. The Cytoplasmic portion of the chain corresponds to 141 to 148; the sequence is SKRTEGIV.

It belongs to the RAMP family. As to quaternary structure, heterodimer of CALCRL and RAMP1; the interaction induces allosteric modulation of CALCRL function and CGRP1/CALCA and CGRP2/CALCB ligand specificity. Heterodimer of CALCR and RAMP1; interaction forms the AMYR1 receptor complex for amylin/IAPP and CGRP1/CALCA ligands. In terms of tissue distribution, expressed predominantly in the thymus, skeletal muscle, embryonic and adult brain, embryonic and adult lung, and colon.

It localises to the cell membrane. Accessory protein that interacts with and modulates the function of G-protein coupled receptors including calcitonin gene-related peptide type 1 receptor (CALCRL) and calcitonin receptor (CALCR). Required for the transport of CALCRL to the plasma membrane. Together with CALCRL, form the receptor complex for the calcitonin gene-related peptides CGRP1/CALCA and CGRP2/CALCB. Together with CALCR, form the AMYR1 receptor complex for amylin/IAPP and CGRP1/CALCA. The sequence is that of Receptor activity-modifying protein 1 from Mus musculus (Mouse).